Here is a 605-residue protein sequence, read N- to C-terminus: Tegument protein UL47 homolog (605 aa).

Residues 1–75 (MATDNARPRS…DPWKLEPAND (75 aa)) are disordered. The span at 8 to 17 (PRSRSLRRKS) shows a compositional bias: basic residues. The span at 54 to 69 (GADRDPGTRRGIDPWK) shows a compositional bias: basic and acidic residues.

The protein belongs to the alphaherpesvirinae HHV-1 UL47 family. As to quaternary structure, interacts with US3 kinase. Interacts with UL31 and UL34; these interactions seem important for efficient virion nuclear egress. Interacts with UL41/VHS. Phosphorylated by US3. This phosphorylation is required for proper nuclear localization.

Its subcellular location is the virion tegument. The protein localises to the host nucleus. It is found in the host cytoplasm. Its function is as follows. Tegument protein that can bind to various RNA transcripts. Plays a role in the attenuation of selective viral and cellular mRNA degradation by modulating the activity of host shutoff RNase UL41/VHS. Also plays a role in the primary envelopment of virions in the perinuclear space, probably by interacting with two nuclear egress proteins UL31 and UL34. The polypeptide is Tegument protein UL47 homolog (sORF1) (Amazona oratrix (yellow-headed parrot)).